Here is a 429-residue protein sequence, read N- to C-terminus: Adenylosuccinate synthetase (429 aa).

GTP contacts are provided by residues 12 to 18 (GDEGKGK) and 40 to 42 (GHT). Residue D13 is the Proton acceptor of the active site. Residues D13 and G40 each coordinate Mg(2+). IMP is bound by residues 13–16 (DEGK), 38–41 (NAGH), T129, R143, Q224, T239, and R303. Residue H41 is the Proton donor of the active site. 299–305 (VTTGRAR) serves as a coordination point for substrate. Residues R305, 331–333 (KLD), and 413–415 (GVG) contribute to the GTP site.

This sequence belongs to the adenylosuccinate synthetase family. Homodimer. Mg(2+) is required as a cofactor.

It localises to the cytoplasm. It carries out the reaction IMP + L-aspartate + GTP = N(6)-(1,2-dicarboxyethyl)-AMP + GDP + phosphate + 2 H(+). It functions in the pathway purine metabolism; AMP biosynthesis via de novo pathway; AMP from IMP: step 1/2. Functionally, plays an important role in the de novo pathway of purine nucleotide biosynthesis. Catalyzes the first committed step in the biosynthesis of AMP from IMP. This Rhodococcus erythropolis (strain PR4 / NBRC 100887) protein is Adenylosuccinate synthetase.